We begin with the raw amino-acid sequence, 109 residues long: Nucleoid-associated protein BCB4264_A0025 (109 aa).

The protein belongs to the YbaB/EbfC family. As to quaternary structure, homodimer.

The protein resides in the cytoplasm. It is found in the nucleoid. Its function is as follows. Binds to DNA and alters its conformation. May be involved in regulation of gene expression, nucleoid organization and DNA protection. This is Nucleoid-associated protein BCB4264_A0025 from Bacillus cereus (strain B4264).